The sequence spans 355 residues: dTDP-D-glucose 4,6-dehydratase (355 aa).

Thr142 serves as a coordination point for substrate. The Proton donor role is filled by Asp143. Active-site proton acceptor residues include Glu144 and Tyr166.

This sequence belongs to the NAD(P)-dependent epimerase/dehydratase family. dTDP-glucose dehydratase subfamily. The cofactor is NAD(+).

The catalysed reaction is dTDP-alpha-D-glucose = dTDP-4-dehydro-6-deoxy-alpha-D-glucose + H2O. This is dTDP-D-glucose 4,6-dehydratase (TGDS) from Bos taurus (Bovine).